The primary structure comprises 365 residues: Probable dual-specificity RNA methyltransferase RlmN (365 aa).

Residue Glu99 is the Proton acceptor of the active site. Residues 105 to 344 (QSYGLSVCVT…CVVRQEHGTD (240 aa)) form the Radical SAM core domain. An intrachain disulfide couples Cys112 to Cys349. 3 residues coordinate [4Fe-4S] cluster: Cys119, Cys123, and Cys126. Residues 171-172 (GE), Ser203, 227-229 (SLH), and Asn305 each bind S-adenosyl-L-methionine. Catalysis depends on Cys349, which acts as the S-methylcysteine intermediate.

Belongs to the radical SAM superfamily. RlmN family. Requires [4Fe-4S] cluster as cofactor.

It localises to the cytoplasm. It carries out the reaction adenosine(2503) in 23S rRNA + 2 reduced [2Fe-2S]-[ferredoxin] + 2 S-adenosyl-L-methionine = 2-methyladenosine(2503) in 23S rRNA + 5'-deoxyadenosine + L-methionine + 2 oxidized [2Fe-2S]-[ferredoxin] + S-adenosyl-L-homocysteine. It catalyses the reaction adenosine(37) in tRNA + 2 reduced [2Fe-2S]-[ferredoxin] + 2 S-adenosyl-L-methionine = 2-methyladenosine(37) in tRNA + 5'-deoxyadenosine + L-methionine + 2 oxidized [2Fe-2S]-[ferredoxin] + S-adenosyl-L-homocysteine. Its function is as follows. Specifically methylates position 2 of adenine 2503 in 23S rRNA and position 2 of adenine 37 in tRNAs. This is Probable dual-specificity RNA methyltransferase RlmN from Lactococcus lactis subsp. cremoris (strain MG1363).